Consider the following 555-residue polypeptide: CCR4-NOT transcription complex subunit 6-like (555 aa).

The tract at residues 1–152 (MRLIGMPKEK…SLYQDPDGTR (152 aa)) is required for interaction with CNOT1, CNOT3 and CNOT7. LRR repeat units lie at residues 57 to 78 (HLTA…IAKL), 80 to 101 (NLVY…LGNM), 103 to 125 (SLRE…GRLF), and 126 to 148 (QLQT…YQDP). A nuclease domain region spans residues 158–555 (MLDNLAVHPE…VNGVHLPNRR (398 aa)). Glu240 is a Mg(2+) binding site. Substrate-binding residues include Glu240, Glu276, His360, and Pro365. Asp410 contributes to the Mg(2+) binding site. Catalysis depends on Asp410, which acts as the Proton donor/acceptor. Residues Asn412, Asn479, and Phe484 each coordinate substrate.

Belongs to the CCR4/nocturin family. As to quaternary structure, component of the CCR4-NOT complex; distinct complexes seem to exist that differ in the participation of probably mutually exclusive catalytic subunits; the complex contains two deadenylase subunits, CNOT6 or CNOT6L, and CNOT7 or CNOT8. Interacts with CNOT1, CNOT3, CNOT7, CNOT8 and CNOT9. Interacts with TOB1. Interacts with NANOS2. Interacts with ZFP36. Interacts with ZFP36L2. Interacts with RBM46. Mg(2+) is required as a cofactor.

It localises to the cytoplasm. It is found in the nucleus. The catalysed reaction is Exonucleolytic cleavage of poly(A) to 5'-AMP.. Its function is as follows. Poly(A) nuclease with 3'-5' RNase activity. Catalytic component of the CCR4-NOT complex which is one of the major cellular mRNA deadenylases and is linked to various cellular processes including bulk mRNA degradation, miRNA-mediated repression, translational repression during translational initiation and general transcription regulation. Additional complex functions may be a consequence of its influence on mRNA expression. Involved in mRNA decay mediated by the major-protein-coding determinant of instability (mCRD) of the FOS gene in the cytoplasm. Involved in deadenylation-dependent degradation of CDKN1B mRNA. Its mRNA deadenylase activity can be inhibited by TOB1. Mediates cell proliferation and cell survival and prevents cellular senescence. This is CCR4-NOT transcription complex subunit 6-like (Cnot6l) from Mus musculus (Mouse).